Reading from the N-terminus, the 132-residue chain is Small ribosomal subunit protein uS19 (132 aa).

It belongs to the universal ribosomal protein uS19 family.

Protein S19 forms a complex with S13 that binds strongly to the 16S ribosomal RNA. In Korarchaeum cryptofilum (strain OPF8), this protein is Small ribosomal subunit protein uS19.